We begin with the raw amino-acid sequence, 412 residues long: Glutamate dehydrogenase (412 aa).

Lys-102 is a catalytic residue.

Belongs to the Glu/Leu/Phe/Val dehydrogenases family. In terms of tissue distribution, in roots, stems, leaves and flowers but not in fruits.

It is found in the mitochondrion matrix. The catalysed reaction is L-glutamate + NAD(+) + H2O = 2-oxoglutarate + NH4(+) + NADH + H(+). The enzyme catalyses L-glutamate + NADP(+) + H2O = 2-oxoglutarate + NH4(+) + NADPH + H(+). The polypeptide is Glutamate dehydrogenase (GDH1) (Solanum lycopersicum (Tomato)).